The sequence spans 386 residues: Mannitol-1-phosphate 5-dehydrogenase (386 aa).

6–17 (AIHFGGGNIGRG) provides a ligand contact to NAD(+). Lys214 is a catalytic residue.

It belongs to the mannitol dehydrogenase family. Monomer.

The catalysed reaction is D-mannitol 1-phosphate + NAD(+) = beta-D-fructose 6-phosphate + NADH + H(+). Catalyzes the NAD(H)-dependent interconversion of D-fructose 6-phosphate and D-mannitol 1-phosphate in the mannitol metabolic pathway. Plays a key role in liamocins biosynthesis by providing the mannitol moity that is linked to 3,5-dihydroxydecanoic acid (provided by the HR-PKS PKS1) via ester bond formation catalyzed by the esterase EST1. This Aureobasidium melanogenum (Aureobasidium pullulans var. melanogenum) protein is Mannitol-1-phosphate 5-dehydrogenase.